The primary structure comprises 389 residues: Na(+)/H(+) antiporter NhaA (389 aa).

11 consecutive transmembrane segments (helical) span residues 14 to 34 (AGGI…NSPL), 59 to 79 (LILW…GLEV), 95 to 115 (SLPT…YLLF), 124 to 144 (AGWA…MALL), 154 to 174 (VFLL…IALF), 177 to 197 (TDLS…LVGL), 213 to 233 (LILW…GVII), 257 to 277 (PWST…VYVG), 292 to 312 (IALG…YIAV), 328 to 348 (IAPV…IASL), and 363 to 383 (LGTL…LSKV).

It belongs to the NhaA Na(+)/H(+) (TC 2.A.33) antiporter family.

The protein localises to the cell inner membrane. The enzyme catalyses Na(+)(in) + 2 H(+)(out) = Na(+)(out) + 2 H(+)(in). Its function is as follows. Na(+)/H(+) antiporter that extrudes sodium in exchange for external protons. The chain is Na(+)/H(+) antiporter NhaA from Shewanella baltica (strain OS223).